Consider the following 525-residue polypeptide: Glutamate synthase large subunit-like protein YerD (525 aa).

The helical transmembrane segment at 4–24 (IIIALIAFIIGIIAIPIVLFA) threads the bilayer.

Belongs to the glutamate synthase family.

The protein resides in the cell membrane. The protein is Glutamate synthase large subunit-like protein YerD (yerD) of Bacillus subtilis (strain 168).